Reading from the N-terminus, the 174-residue chain is Variant surface antigen F (174 aa).

The signal sequence occupies residues 1–29; that stretch reads MKKSIFSKKLLFSFGSLVALAAIPLITIS. Residue Cys-30 is the site of N-palmitoyl cysteine attachment. Cys-30 carries the S-diacylglycerol cysteine lipid modification. The interval 32 to 174 is disordered; it reads QTNTDQSQQP…PEQGNSQVSK (143 aa). Positions 43–53 are enriched in gly residues; sequence SGSGSGSGTSN. A run of 9 repeats spans residues 55-67, 68-80, 81-93, 94-106, 107-119, 120-132, 133-145, 146-158, and 159-171. Residues 55–171 form a 9 X 13 AA tandem repeats region; the sequence is SGSTPTPEQG…TPTPEQGNSQ (117 aa). A compositionally biased stretch (polar residues) spans 62-174; it reads EQGNNQGGST…PEQGNSQVSK (113 aa).

The protein localises to the cell membrane. In terms of biological role, responsible for the antigenic diversity for host adaptation. Expression in E.coli of a construct containing vlpD, vlpE, and vlpF yields antigenically distinguishable products corresponding to each gene. In Mesomycoplasma hyorhinis (Mycoplasma hyorhinis), this protein is Variant surface antigen F (vlpF).